We begin with the raw amino-acid sequence, 127 residues long: MSESEKYRIEVEAIAEFVPGQSDPDENRYVFAYHITLTNTGEVPAQLISRHWVITDGAGKVQEVRGLGVIGEQPMLAPGQQFSYSSGSVLETPVGTMQGSYQMAAEDGHRFDAEIPAFMLAMPRVLH.

One can recognise an ApaG domain in the interval 3–127; sequence ESEKYRIEVE…FMLAMPRVLH (125 aa).

The sequence is that of Protein ApaG from Aromatoleum aromaticum (strain DSM 19018 / LMG 30748 / EbN1) (Azoarcus sp. (strain EbN1)).